An 874-amino-acid chain; its full sequence is Alanine--tRNA ligase (874 aa).

4 residues coordinate Zn(2+): histidine 562, histidine 566, cysteine 665, and histidine 669.

This sequence belongs to the class-II aminoacyl-tRNA synthetase family. The cofactor is Zn(2+).

It localises to the cytoplasm. It carries out the reaction tRNA(Ala) + L-alanine + ATP = L-alanyl-tRNA(Ala) + AMP + diphosphate. In terms of biological role, catalyzes the attachment of alanine to tRNA(Ala) in a two-step reaction: alanine is first activated by ATP to form Ala-AMP and then transferred to the acceptor end of tRNA(Ala). Also edits incorrectly charged Ser-tRNA(Ala) and Gly-tRNA(Ala) via its editing domain. The protein is Alanine--tRNA ligase of Pseudomonas putida (strain GB-1).